The primary structure comprises 358 residues: DNA replication and repair protein RecF (358 aa).

Residue 30-37 (GNNGSGKT) participates in ATP binding.

Belongs to the RecF family.

The protein localises to the cytoplasm. In terms of biological role, the RecF protein is involved in DNA metabolism; it is required for DNA replication and normal SOS inducibility. RecF binds preferentially to single-stranded, linear DNA. It also seems to bind ATP. The protein is DNA replication and repair protein RecF of Actinobacillus succinogenes (strain ATCC 55618 / DSM 22257 / CCUG 43843 / 130Z).